An 833-amino-acid polypeptide reads, in one-letter code: Lon protease (833 aa).

The Lon N-terminal domain occupies 3-198; that stretch reads YPFMATRGVI…LIFSFLVELK (196 aa). 390 to 397 provides a ligand contact to ATP; sequence GPPGTGKT. In terms of domain architecture, Lon proteolytic spans 627–808; it reads YERIGAVNGL…DEIFENLFGK (182 aa). Residues Ser714 and Lys757 contribute to the active site.

The protein belongs to the peptidase S16 family. In terms of assembly, homohexamer. Organized in a ring with a central cavity.

It localises to the cytoplasm. It catalyses the reaction Hydrolysis of proteins in presence of ATP.. In terms of biological role, ATP-dependent serine protease that mediates the selective degradation of mutant and abnormal proteins as well as certain short-lived regulatory proteins. Required for cellular homeostasis and for survival from DNA damage and developmental changes induced by stress. Degrades polypeptides processively to yield small peptide fragments that are 5 to 10 amino acids long. Binds to DNA in a double-stranded, site-specific manner. The protein is Lon protease of Mycoplasma mobile (strain ATCC 43663 / 163K / NCTC 11711) (Mesomycoplasma mobile).